We begin with the raw amino-acid sequence, 97 residues long: UPF0235 protein cbdbA1230 (97 aa).

Belongs to the UPF0235 family.

The chain is UPF0235 protein cbdbA1230 from Dehalococcoides mccartyi (strain CBDB1).